Consider the following 319-residue polypeptide: Transcription elongation factor A protein 1 (319 aa).

Residues 1–78 (MQEIIKCREQ…DKWKQDIEGT (78 aa)) form the TFIIS N-terminal domain. The span at 78–106 (TSATTTSSSSSSSSSTTSTTTTKTASPSE) shows a compositional bias: low complexity. The interval 78–146 (TSATTTSSSS…TTPKTSSPPI (69 aa)) is disordered. Basic and acidic residues predominate over residues 107-122 (SLKRKSISEDTSDRPT). Low complexity predominate over residues 133-146 (ISPPTTPKTSSPPI). A TFIIS central domain is found at 160 to 272 (LRNKTIQLFV…ASMLGQNNEA (113 aa)). Residues 275–317 (DQFQCGKCKQRKCTYTQLQTRSADEPPTTFVKCCVKGCGNRWR) form a TFIIS-type zinc finger. 4 residues coordinate Zn(2+): Cys279, Cys282, Cys307, and Cys312.

It belongs to the TFS-II family.

The protein localises to the nucleus. In terms of biological role, necessary for efficient RNA polymerase II transcription elongation past template-encoded arresting sites. The arresting sites in DNA have the property of trapping a certain fraction of elongating RNA polymerases that pass through, resulting in locked ternary complexes. Cleavage of the nascent transcript by S-II allows the resumption of elongation from the new 3'-terminus. The protein is Transcription elongation factor A protein 1 (tcea1) of Dictyostelium discoideum (Social amoeba).